Consider the following 385-residue polypeptide: Aryl-alcohol dehydrogenase [NADP(+)] (385 aa).

Y76 functions as the Proton donor in the catalytic mechanism. An NADP(+)-binding site is contributed by N238 to D248.

Belongs to the aldo/keto reductase family. Aldo/keto reductase 2 subfamily. Post-translationally, the N-terminus is blocked.

The enzyme catalyses an aromatic primary alcohol + NADP(+) = an aromatic aldehyde + NADPH + H(+). The protein is Aryl-alcohol dehydrogenase [NADP(+)] of Phanerodontia chrysosporium (White-rot fungus).